A 364-amino-acid polypeptide reads, in one-letter code: MMSKNYHIAVLPGDGIGPEVMTQALKVLDAVRNRFAMRITTSHYDVGGAAIDNHGQPLPPATVEGCEQADAVLFGSVGGPKWEHLPPDQQPERGALLPLRKHFKLFSNLRPAKLYQGLEAFCPLRADIAANGFDILCVRELTGGIYFGQPKGREGSGQYEKAFDTEVYHRFEIERIARIAFESARKRRHKVTSIDKANVLQSSILWREIVNEIATEYPDVELAHMYIDNATMQLIKDPSQFDVLLCSNLFGDILSDECAMITGSMGMLPSASLNEQGFGLYEPAGGSAPDIAGKNIANPIAQILSLALLLRYSLDADDAASAIERAINRALEEGIRTGDLARGAAAVSTDEMGDIIARYVAEGV.

Residue 79–92 participates in NAD(+) binding; it reads GPKWEHLPPDQQPE. 4 residues coordinate substrate: arginine 100, arginine 110, arginine 139, and aspartate 228. Residues aspartate 228, aspartate 252, and aspartate 256 each contribute to the Mg(2+) site. 286 to 298 is an NAD(+) binding site; the sequence is GSAPDIAGKNIAN.

This sequence belongs to the isocitrate and isopropylmalate dehydrogenases family. LeuB type 1 subfamily. In terms of assembly, homodimer. It depends on Mg(2+) as a cofactor. Mn(2+) serves as cofactor.

The protein localises to the cytoplasm. The enzyme catalyses (2R,3S)-3-isopropylmalate + NAD(+) = 4-methyl-2-oxopentanoate + CO2 + NADH. It functions in the pathway amino-acid biosynthesis; L-leucine biosynthesis; L-leucine from 3-methyl-2-oxobutanoate: step 3/4. Functionally, catalyzes the oxidation of 3-carboxy-2-hydroxy-4-methylpentanoate (3-isopropylmalate) to 3-carboxy-4-methyl-2-oxopentanoate. The product decarboxylates to 4-methyl-2 oxopentanoate. The chain is 3-isopropylmalate dehydrogenase from Escherichia coli (strain UTI89 / UPEC).